Reading from the N-terminus, the 435-residue chain is 5-methylthioadenosine/S-adenosylhomocysteine deaminase (435 aa).

Residues His65 and His67 each coordinate Zn(2+). Substrate is bound by residues Glu94, Arg150, and His189. His216 is a binding site for Zn(2+). Residues Glu219 and Asp304 each coordinate substrate. Residue Asp304 participates in Zn(2+) binding.

It belongs to the metallo-dependent hydrolases superfamily. MTA/SAH deaminase family. It depends on Zn(2+) as a cofactor.

It carries out the reaction S-adenosyl-L-homocysteine + H2O + H(+) = S-inosyl-L-homocysteine + NH4(+). It catalyses the reaction S-methyl-5'-thioadenosine + H2O + H(+) = S-methyl-5'-thioinosine + NH4(+). In terms of biological role, catalyzes the deamination of 5-methylthioadenosine and S-adenosyl-L-homocysteine into 5-methylthioinosine and S-inosyl-L-homocysteine, respectively. Is also able to deaminate adenosine. The protein is 5-methylthioadenosine/S-adenosylhomocysteine deaminase of Bacillus cereus (strain B4264).